We begin with the raw amino-acid sequence, 45 residues long: Thymosin beta-15A homolog (45 aa).

The disordered stretch occupies residues 19-45 (KKTNTEEKNTLPSKETIEQEKECVKSS). Over residues 21–45 (TNTEEKNTLPSKETIEQEKECVKSS) the composition is skewed to basic and acidic residues.

The protein belongs to the thymosin beta family.

It localises to the cytoplasm. The protein resides in the cytoskeleton. Functionally, plays an important role in the organization of the cytoskeleton. Binds to and sequesters actin monomers (G actin) and therefore inhibits actin polymerization. In Coturnix japonica (Japanese quail), this protein is Thymosin beta-15A homolog.